A 1784-amino-acid chain; its full sequence is Histone acetyltransferase KAT6B (1784 aa).

In terms of domain architecture, SAMD1-like winged helix (WH) spans 1 to 77 (MVKLANPLYT…LASYKDPDNP (77 aa)). Residues 72 to 98 (KDPDNPGRFSSVKPGTFPKSTKESRGS) form a disordered region. The H15 domain maps to 103–176 (RNVDWNKLLR…KDGPQYRVNY (74 aa)). PHD-type zinc fingers lie at residues 213 to 272 (IPIC…CKTC) and 269 to 320 (CKTC…CRPK). A Phosphoserine modification is found at S355. The tract at residues 361-425 (GSMNAFTGRG…ECESGVEDCG (65 aa)) is negatively regulates HAT activity. A Glycyl lysine isopeptide (Lys-Gly) (interchain with G-Cter in SUMO2) cross-link involves residue K381. One can recognise an MYST-type HAT domain in the interval 423–697 (DCGRYPSVIE…LDPDSLRWTP (275 aa)). Residues 426 to 716 (RYPSVIEFGK…EEEREAEKEA (291 aa)) form a catalytic region. A C2HC MYST-type zinc finger spans residues 456–481 (LYLCEFCLKYMKSKNILLRHSKKCGW). An interaction with BRPF1 region spans residues 460-716 (EFCLKYMKSK…EEEREAEKEA (257 aa)). K523 is subject to N6-acetyllysine; by autocatalysis. Residues 564-568 (SCIMI) and 573-579 (QRQGFGR) contribute to the acetyl-CoA site. Catalysis depends on E599, which acts as the Proton donor/acceptor. Residue S603 participates in acetyl-CoA binding. 4 disordered regions span residues 730–884 (EQEV…RPMP), 904–1163 (RKAF…FKEV), 1195–1273 (SCNS…FQDC), and 1291–1330 (QSPQ…SPSV). Over residues 733–751 (VLSTRANSRQSPAKVQSKN) the composition is skewed to polar residues. An N6-acetyllysine mark is found at K746, K750, and K752. S756 bears the Phosphoserine mark. Residues 777–819 (SEEEEEEEEDEEEEDEEEEEEEEEDEEEEEEEEEEEEEEEEEN) show a composition bias toward acidic residues. The span at 820-831 (IQSSPPRLTKPQ) shows a compositional bias: polar residues. The segment covering 835-854 (IKRKRPFVLKKKRGRKRRRI) has biased composition (basic residues). The span at 856-869 (SSVTTETISETTEV) shows a compositional bias: low complexity. Over residues 904 to 914 (RKAFQHQPGKK) the composition is skewed to basic residues. Basic and acidic residues-rich tracts occupy residues 938-957 (MNDD…EPLK) and 1055-1064 (EKPEDDLIKP). Over residues 1065-1087 (EEEEEEEEEEEEEEGEEEEEEGG) the composition is skewed to acidic residues. Basic and acidic residues-rich tracts occupy residues 1088–1101 (NVEK…SQEK) and 1107–1118 (SPEKEDSARLDD). Acidic residues predominate over residues 1119–1128 (HEEEEEEDEE). Residues 1144–1163 (HMESAEVEKEELPRESFKEV) show a composition bias toward basic and acidic residues. The segment covering 1209–1218 (AVPESDEEPP) has biased composition (acidic residues). Residues 1224-1240 (QKQDQKNSKEVDTEFKE) show a composition bias toward basic and acidic residues. Polar residues-rich tracts occupy residues 1251-1263 (ETVQ…TQES) and 1291-1302 (QSPQIATTLDDC). The segment at 1271-1784 (QDCAETQEAC…QSLNGSYMRR (514 aa)) is interaction with RUNX1 and RUNX2. Over residues 1305–1322 (SDHSSPVSSVHSHPGQSV) the composition is skewed to low complexity.

The protein belongs to the MYST (SAS/MOZ) family. In terms of assembly, component of the MOZ/MORF complex composed at least of ING5, KAT6A, KAT6B, MEAF6 and one of BRPF1, BRD1/BRPF2 and BRPF3. Interacts with RUNX1 and RUNX2. Autoacetylation at Lys-523 is required for proper function.

The protein resides in the nucleus. It catalyses the reaction L-lysyl-[protein] + acetyl-CoA = N(6)-acetyl-L-lysyl-[protein] + CoA + H(+). Histone acetyltransferase which may be involved in both positive and negative regulation of transcription. Required for RUNX2-dependent transcriptional activation. May be involved in cerebral cortex development. Component of the MOZ/MORF complex which has a histone H3 acetyltransferase activity. In Macaca fascicularis (Crab-eating macaque), this protein is Histone acetyltransferase KAT6B (KAT6B).